A 540-amino-acid chain; its full sequence is Chaperonin GroEL (540 aa).

ATP is bound by residues 29-32, 86-90, Gly413, 476-478, and Asp492; these read TLGP, DGTTT, and NAA.

The protein belongs to the chaperonin (HSP60) family. Forms a cylinder of 14 subunits composed of two heptameric rings stacked back-to-back. Interacts with the co-chaperonin GroES.

The protein resides in the cytoplasm. The enzyme catalyses ATP + H2O + a folded polypeptide = ADP + phosphate + an unfolded polypeptide.. Functionally, together with its co-chaperonin GroES, plays an essential role in assisting protein folding. The GroEL-GroES system forms a nano-cage that allows encapsulation of the non-native substrate proteins and provides a physical environment optimized to promote and accelerate protein folding. In Streptococcus constellatus, this protein is Chaperonin GroEL.